A 733-amino-acid chain; its full sequence is Phosphoribosylformylglycinamidine synthase subunit PurL (733 aa).

Histidine 32 is a catalytic residue. Tyrosine 35 provides a ligand contact to ATP. Mg(2+) is bound at residue glutamate 81. Substrate contacts are provided by residues 82–85 (SHNH) and arginine 104. Histidine 83 (proton acceptor) is an active-site residue. Residue aspartate 105 coordinates Mg(2+). Glutamine 230 provides a ligand contact to substrate. Position 258 (aspartate 258) interacts with Mg(2+). 301–303 (ESQ) serves as a coordination point for substrate. Aspartate 482 and glycine 519 together coordinate ATP. Asparagine 520 is a binding site for Mg(2+). Position 522 (serine 522) interacts with substrate.

Belongs to the FGAMS family. Monomer. Part of the FGAM synthase complex composed of 1 PurL, 1 PurQ and 2 PurS subunits.

Its subcellular location is the cytoplasm. It carries out the reaction N(2)-formyl-N(1)-(5-phospho-beta-D-ribosyl)glycinamide + L-glutamine + ATP + H2O = 2-formamido-N(1)-(5-O-phospho-beta-D-ribosyl)acetamidine + L-glutamate + ADP + phosphate + H(+). Its pathway is purine metabolism; IMP biosynthesis via de novo pathway; 5-amino-1-(5-phospho-D-ribosyl)imidazole from N(2)-formyl-N(1)-(5-phospho-D-ribosyl)glycinamide: step 1/2. Its function is as follows. Part of the phosphoribosylformylglycinamidine synthase complex involved in the purines biosynthetic pathway. Catalyzes the ATP-dependent conversion of formylglycinamide ribonucleotide (FGAR) and glutamine to yield formylglycinamidine ribonucleotide (FGAM) and glutamate. The FGAM synthase complex is composed of three subunits. PurQ produces an ammonia molecule by converting glutamine to glutamate. PurL transfers the ammonia molecule to FGAR to form FGAM in an ATP-dependent manner. PurS interacts with PurQ and PurL and is thought to assist in the transfer of the ammonia molecule from PurQ to PurL. In Methanocaldococcus jannaschii (strain ATCC 43067 / DSM 2661 / JAL-1 / JCM 10045 / NBRC 100440) (Methanococcus jannaschii), this protein is Phosphoribosylformylglycinamidine synthase subunit PurL.